A 1057-amino-acid polypeptide reads, in one-letter code: Carbamoyl phosphate synthase large chain (1057 aa).

Positions 1–401 are carboxyphosphate synthetic domain; the sequence is MPKRNDIKTI…SLLKAIRSLE (401 aa). Residues R129, R169, G175, G176, K208, I210, E215, G241, I242, H243, Q284, and E298 each coordinate ATP. One can recognise an ATP-grasp 1 domain in the interval 133–327; the sequence is RNLMNELNEP…IAKLAAKIAV (195 aa). Positions 284, 298, and 300 each coordinate Mg(2+). Mn(2+) contacts are provided by Q284, E298, and N300. Residues 402 to 546 are oligomerization domain; the sequence is YGVHHLGLPN…YGTYETENES (145 aa). The segment at 547–929 is carbamoyl phosphate synthetic domain; that stretch reads IRSDKKKVVV…ALYKGLVASG (383 aa). The region spanning 671–861 is the ATP-grasp 2 domain; it reads EALMQRIEIP…MANLAMKAIL (191 aa). Positions 707, 746, 748, 752, 777, 778, 779, 780, 820, and 832 each coordinate ATP. Mg(2+) contacts are provided by Q820, E832, and N834. Positions 820, 832, and 834 each coordinate Mn(2+). The MGS-like domain maps to 930–1057; that stretch reads LQVKDHGTVL…ESMTFNMNQM (128 aa). The allosteric domain stretch occupies residues 930–1057; it reads LQVKDHGTVL…ESMTFNMNQM (128 aa).

Belongs to the CarB family. In terms of assembly, composed of two chains; the small (or glutamine) chain promotes the hydrolysis of glutamine to ammonia, which is used by the large (or ammonia) chain to synthesize carbamoyl phosphate. Tetramer of heterodimers (alpha,beta)4. Mg(2+) serves as cofactor. Mn(2+) is required as a cofactor.

It carries out the reaction hydrogencarbonate + L-glutamine + 2 ATP + H2O = carbamoyl phosphate + L-glutamate + 2 ADP + phosphate + 2 H(+). It catalyses the reaction hydrogencarbonate + NH4(+) + 2 ATP = carbamoyl phosphate + 2 ADP + phosphate + 2 H(+). It functions in the pathway amino-acid biosynthesis; L-arginine biosynthesis; carbamoyl phosphate from bicarbonate: step 1/1. It participates in pyrimidine metabolism; UMP biosynthesis via de novo pathway; (S)-dihydroorotate from bicarbonate: step 1/3. Its function is as follows. Large subunit of the glutamine-dependent carbamoyl phosphate synthetase (CPSase). CPSase catalyzes the formation of carbamoyl phosphate from the ammonia moiety of glutamine, carbonate, and phosphate donated by ATP, constituting the first step of 2 biosynthetic pathways, one leading to arginine and/or urea and the other to pyrimidine nucleotides. The large subunit (synthetase) binds the substrates ammonia (free or transferred from glutamine from the small subunit), hydrogencarbonate and ATP and carries out an ATP-coupled ligase reaction, activating hydrogencarbonate by forming carboxy phosphate which reacts with ammonia to form carbamoyl phosphate. This Macrococcus caseolyticus (strain JCSC5402) (Macrococcoides caseolyticum) protein is Carbamoyl phosphate synthase large chain.